A 330-amino-acid polypeptide reads, in one-letter code: Urokinase plasminogen activator surface receptor (330 aa).

An N-terminal signal peptide occupies residues 1–20 (MGQPLLLLLLVYTYIPGSWG). UPAR/Ly6 domains follow at residues 21–112 (LRCL…RNRY), 113–208 (LECA…PPNG), and 209–300 (LQCY…PGKG). 3 cysteine pairs are disulfide-bonded: Cys-23-Cys-44, Cys-26-Cys-32, and Cys-37-Cys-65. N-linked (GlcNAc...) asparagine glycosylation is present at Asn-28. N-linked (GlcNAc...) asparagine glycosylation occurs at Asn-72. 11 disulfides stabilise this stretch: Cys-91–Cys-96, Cys-115–Cys-142, Cys-118–Cys-125, Cys-135–Cys-164, Cys-170–Cys-187, Cys-188–Cys-193, Cys-211–Cys-239, Cys-214–Cys-222, Cys-232–Cys-258, Cys-264–Cys-282, and Cys-283–Cys-288. N-linked (GlcNAc...) asparagine glycans are attached at residues Asn-179 and Asn-189. An N-linked (GlcNAc...) asparagine glycan is attached at Asn-279. Gly-300 carries the GPI-anchor amidated glycine lipid modification. Positions 301-330 (GAPKTSPAHLSFFVSLLLTARLWGATLLCT) are cleaved as a propeptide — removed in mature form.

In terms of assembly, monomer. Interacts (via the UPAR/Ly6 domains) with SRPX2. Interacts with MRC2. Interacts with SORL1 (via N-terminal ectodomain); this interaction decreases PLAUR internalization. The ternary complex composed of PLAUR-PLAU-SERPINE1 also interacts with SORL1. Interacts with CD82; this interaction prevents PLAUR from binding to its high affinity ligand PLAU.

Its subcellular location is the cell membrane. In terms of biological role, acts as a receptor for urokinase plasminogen activator. Plays a role in localizing and promoting plasmin formation. Mediates the proteolysis-independent signal transduction activation effects of U-PA. The chain is Urokinase plasminogen activator surface receptor (PLAUR) from Bos taurus (Bovine).